We begin with the raw amino-acid sequence, 285 residues long: Nucleotide-binding protein Pmen_0867 (285 aa).

8–15 (GRSGSGKS) serves as a coordination point for ATP. A GTP-binding site is contributed by 60 to 63 (DARN).

This sequence belongs to the RapZ-like family.

In terms of biological role, displays ATPase and GTPase activities. The polypeptide is Nucleotide-binding protein Pmen_0867 (Ectopseudomonas mendocina (strain ymp) (Pseudomonas mendocina)).